Here is a 104-residue protein sequence, read N- to C-terminus: Replication restart protein PriB (104 aa).

An SSB domain is found at 1–101 (MTNRLVLSGT…LHAEQIDLID (101 aa)).

Belongs to the PriB family. Homodimer. Interacts with PriA and DnaT. Component of the replication restart primosome. Primosome assembly occurs via a 'hand-off' mechanism. PriA binds to replication forks, subsequently PriB then DnaT bind; DnaT then displaces ssDNA to generate the helicase loading substrate.

In terms of biological role, involved in the restart of stalled replication forks, which reloads the replicative helicase on sites other than the origin of replication; the PriA-PriB pathway is the major replication restart pathway. During primosome assembly it facilitates complex formation between PriA and DnaT on DNA; stabilizes PriA on DNA. Stimulates the DNA unwinding activity of PriA helicase. This Enterobacter sp. (strain 638) protein is Replication restart protein PriB.